Reading from the N-terminus, the 146-residue chain is UPF0260 protein Swoo_2117 (146 aa).

It belongs to the UPF0260 family.

This Shewanella woodyi (strain ATCC 51908 / MS32) protein is UPF0260 protein Swoo_2117.